We begin with the raw amino-acid sequence, 315 residues long: Methionyl-tRNA formyltransferase (315 aa).

113–116 (SILP) is a (6S)-5,6,7,8-tetrahydrofolate binding site.

The protein belongs to the Fmt family.

The enzyme catalyses L-methionyl-tRNA(fMet) + (6R)-10-formyltetrahydrofolate = N-formyl-L-methionyl-tRNA(fMet) + (6S)-5,6,7,8-tetrahydrofolate + H(+). Functionally, attaches a formyl group to the free amino group of methionyl-tRNA(fMet). The formyl group appears to play a dual role in the initiator identity of N-formylmethionyl-tRNA by promoting its recognition by IF2 and preventing the misappropriation of this tRNA by the elongation apparatus. This is Methionyl-tRNA formyltransferase from Vibrio cholerae serotype O1 (strain M66-2).